Consider the following 48-residue polypeptide: ATP synthase protein 8 (48 aa).

A helical transmembrane segment spans residues Leu13–Leu32.

It belongs to the ATPase protein 8 family. In terms of assembly, F-type ATPases have 2 components, CF(1) - the catalytic core - and CF(0) - the membrane proton channel.

It localises to the mitochondrion membrane. Functionally, mitochondrial membrane ATP synthase (F(1)F(0) ATP synthase or Complex V) produces ATP from ADP in the presence of a proton gradient across the membrane which is generated by electron transport complexes of the respiratory chain. F-type ATPases consist of two structural domains, F(1) - containing the extramembraneous catalytic core and F(0) - containing the membrane proton channel, linked together by a central stalk and a peripheral stalk. During catalysis, ATP synthesis in the catalytic domain of F(1) is coupled via a rotary mechanism of the central stalk subunits to proton translocation. Part of the complex F(0) domain. Minor subunit located with subunit a in the membrane. This is ATP synthase protein 8 (ATP8) from Kluyveromyces lactis (strain ATCC 8585 / CBS 2359 / DSM 70799 / NBRC 1267 / NRRL Y-1140 / WM37) (Yeast).